Here is a 473-residue protein sequence, read N- to C-terminus: MARGLGAPHRVAVGLLTWAALGLLVAGHGGHGDLYEDLQEDLHGHSHRHSHEDFHHGHSHAHGHGHTHESIWHGHTHGHDHGHSHEDLHHGHIHGDSHESLYHPGHGHDHEHSHGGYGESGAPGIKQDLDTVTLWAYALGATVLISAAPFFVLFLIPVESNSPRHRSLLQILLSFASGGLLGDAFLHLIPHALEPHSHHPLEQPGHGHSHSGQGPILSVGLWVLSGIVAFLVVEKFVRHVKGGHEHSHGHGHAHGHTHGGDSPFEDILVECPSKEKQSSEEEEKEAGASRKRRGGSTRPKDGPVRPQHSGEEKAGSDLRVSGYLNLAADLAHNFTDGLAIGASFRGGRGLGILTTMTVLLHEVPHEVGDFAILVQSGCSKKQAMRLQLLTAVGALAGTAFALLTEGGAAGSEVAGGTGPGWVLPFTAGDQAATQASPRSTSLPPVGEEDFREDPGPRQKGQQEKSGINVNCVS.

A helical membrane pass occupies residues 11 to 31; sequence VAVGLLTWAALGLLVAGHGGH. Basic and acidic residues-rich tracts occupy residues 44–56 and 66–114; these read GHSH…DFHH and HTHE…EHSH. Residues 44-120 are disordered; that stretch reads GHSHRHSHED…EHSHGGYGES (77 aa). H66 bears the Pros-methylhistidine mark. Helical transmembrane passes span 138–158, 169–189, and 214–234; these read ALGA…LIPV, LQIL…LHLI, and GPIL…LVVE. A disordered region spans residues 243 to 316; that stretch reads GHEHSHGHGH…QHSGEEKAGS (74 aa). Phosphoserine is present on residues S278 and S279. Basic and acidic residues predominate over residues 298–316; the sequence is RPKDGPVRPQHSGEEKAGS. Residues 388–408 traverse the membrane as a helical segment; sequence LLTAVGALAGTAFALLTEGGA. The interval 428–473 is disordered; that stretch reads GDQAATQASPRSTSLPPVGEEDFREDPGPRQKGQQEKSGINVNCVS. Residues 431-442 show a composition bias toward polar residues; it reads AATQASPRSTSL. Residues 452-462 are compositionally biased toward basic and acidic residues; sequence EDPGPRQKGQQ. Positions 463–473 are enriched in polar residues; that stretch reads EKSGINVNCVS.

This sequence belongs to the ZIP transporter (TC 2.A.5) family. KE4/Catsup subfamily. As to quaternary structure, homodimer. Methylation at some His residue by METTL9 leads to reduced zinc-binding. Post-translationally, rapidly phosphorylated by CK2 following Zn(2+) treatment. This phosphorylation is required for efficient cytosolic Zn(2+) release.

Its subcellular location is the endoplasmic reticulum membrane. It is found in the golgi apparatus. The protein resides in the cis-Golgi network membrane. It catalyses the reaction Zn(2+)(in) = Zn(2+)(out). Transports Zn(2+) from the endoplasmic reticulum (ER)/Golgi apparatus to the cytosol, playing an essential role in the regulation of cytosolic zinc levels. Acts as a gatekeeper of zinc release from intracellular stores, requiring post-translational activation by phosphorylation on residues, resulting in activation of multiple downstream pathways leading to cell growth and proliferation. Has an essential role in B cell development and is required for proper B cell receptor signaling. Plays an important role in maintaining intestinal epithelial homeostasis and skin dermis development by regulating ER function. Controls cell signaling pathways involved in glucose metabolism in skeletal muscle. Has a protective role against ER stress in different biological contexts. Mediates Zn(2+)-induced ferroptosis. The polypeptide is Zinc transporter SLC39A7 (SLC39A7) (Sus scrofa (Pig)).